The following is a 315-amino-acid chain: Porphobilinogen deaminase (315 aa).

Cys-245 is modified (S-(dipyrrolylmethanemethyl)cysteine).

The protein belongs to the HMBS family. In terms of assembly, monomer. Dipyrromethane serves as cofactor.

It catalyses the reaction 4 porphobilinogen + H2O = hydroxymethylbilane + 4 NH4(+). The protein operates within porphyrin-containing compound metabolism; protoporphyrin-IX biosynthesis; coproporphyrinogen-III from 5-aminolevulinate: step 2/4. It functions in the pathway porphyrin-containing compound metabolism; chlorophyll biosynthesis. Tetrapolymerization of the monopyrrole PBG into the hydroxymethylbilane pre-uroporphyrinogen in several discrete steps. This Prochlorococcus marinus (strain NATL1A) protein is Porphobilinogen deaminase.